Here is a 387-residue protein sequence, read N- to C-terminus: 3-ketoacyl-CoA thiolase (387 aa).

Cys-91 acts as the Acyl-thioester intermediate in catalysis. Active-site proton acceptor residues include His-343 and Cys-373.

Belongs to the thiolase-like superfamily. Thiolase family. As to quaternary structure, heterotetramer of two alpha chains (FadB) and two beta chains (FadA).

The protein localises to the cytoplasm. The enzyme catalyses an acyl-CoA + acetyl-CoA = a 3-oxoacyl-CoA + CoA. The protein operates within lipid metabolism; fatty acid beta-oxidation. In terms of biological role, catalyzes the final step of fatty acid oxidation in which acetyl-CoA is released and the CoA ester of a fatty acid two carbons shorter is formed. The protein is 3-ketoacyl-CoA thiolase of Vibrio vulnificus (strain YJ016).